A 933-amino-acid polypeptide reads, in one-letter code: Bifunctional uridylyltransferase/uridylyl-removing enzyme (933 aa).

The uridylyltransferase stretch occupies residues 1 to 390 (MLSTRAASAD…RLAALARRKD (390 aa)). The uridylyl-removing stretch occupies residues 391–745 (VDGFVVDGER…TRIDRGRAIT (355 aa)). The HD domain maps to 506-628 (VDEHTLFALG…VQSPERLRLL (123 aa)). ACT domains are found at residues 746-829 (EVTI…DLTK) and 859-933 (VIEV…DPSA).

It belongs to the GlnD family. Mg(2+) is required as a cofactor.

The catalysed reaction is [protein-PII]-L-tyrosine + UTP = [protein-PII]-uridylyl-L-tyrosine + diphosphate. It carries out the reaction [protein-PII]-uridylyl-L-tyrosine + H2O = [protein-PII]-L-tyrosine + UMP + H(+). Its activity is regulated as follows. Uridylyltransferase (UTase) activity is inhibited by glutamine, while glutamine activates uridylyl-removing (UR) activity. Uridylylation process is dependent on ATP and 2-oxoglutarate, which are effector molecules that likely bind to PII proteins and control their activity. In terms of biological role, modifies, by uridylylation and deuridylylation, the PII regulatory proteins GlnB and GlnZ, in response to the nitrogen status of the cell that GlnD senses through the glutamine level. Under low glutamine levels, catalyzes the conversion of the PII proteins and UTP to PII-UMP and PPi, while under higher glutamine levels, GlnD hydrolyzes PII-UMP to PII and UMP (deuridylylation). Thus, controls uridylylation state and activity of the PII proteins, and plays an important role in the regulation of nitrogen fixation and metabolism. The chain is Bifunctional uridylyltransferase/uridylyl-removing enzyme from Azospirillum brasilense.